Here is a 362-residue protein sequence, read N- to C-terminus: Terpene synthase 3 (362 aa).

A DDxx(x)D/E motif motif is present at residues D90–R95. Residues N239 to E247 carry the NDxxSxxxD/E motif motif.

The protein belongs to the terpene synthase family.

It catalyses the reaction (2E,6E)-farnesyl diphosphate = beta-maaliene + diphosphate. The catalysed reaction is (2E,6E)-farnesyl diphosphate = aristolene + diphosphate. It carries out the reaction (2E,6E)-farnesyl diphosphate = calarene + diphosphate. The enzyme catalyses (2E)-geranyl diphosphate = (E)-beta-ocimene + diphosphate. It catalyses the reaction (2E)-geranyl diphosphate = (Z)-beta-ocimene + diphosphate. The catalysed reaction is (2E)-geranyl diphosphate + H2O = linalool + diphosphate. It carries out the reaction (2E)-geranyl diphosphate = beta-myrcene + diphosphate. Functionally, terpene synthase that converts its substrate farnesyl diphosphate (FPP) into an unidentified sesquiterpene as a major product, as well as beta-maaliene, aristolene, calarene and 2 additional unidentified sesquiterpene as minor products. Is also able to convert geranyl diphosphate (GPP) into a mixture of monoterpenes including (Z)-beta-ocimene, (E)-beta-ocimene, allo-ocimene, linalool and beta-myrcene. This chain is Terpene synthase 3, found in Dictyostelium discoideum (Social amoeba).